Reading from the N-terminus, the 155-residue chain is Gene 27 protein (155 aa).

Residues 41–114 are disordered; sequence KAKTQGMNVP…KAPENPNLPN (74 aa). Basic and acidic residues-rich tracts occupy residues 55–68 and 78–95; these read KKPE…EKPT and TAKE…ETKA.

Its function is as follows. Required for late gene transcription and DNA replication. This chain is Gene 27 protein (27), found in Bacillus subtilis (Bacteriophage SP01).